We begin with the raw amino-acid sequence, 379 residues long: Cobalt-precorrin-5B C(1)-methyltransferase (379 aa).

This sequence belongs to the CbiD family.

The catalysed reaction is Co-precorrin-5B + S-adenosyl-L-methionine = Co-precorrin-6A + S-adenosyl-L-homocysteine. The protein operates within cofactor biosynthesis; adenosylcobalamin biosynthesis; cob(II)yrinate a,c-diamide from sirohydrochlorin (anaerobic route): step 6/10. Catalyzes the methylation of C-1 in cobalt-precorrin-5B to form cobalt-precorrin-6A. The sequence is that of Cobalt-precorrin-5B C(1)-methyltransferase from Salmonella dublin (strain CT_02021853).